A 792-amino-acid polypeptide reads, in one-letter code: Serine/threonine-protein kinase Nek4 (792 aa).

The Protein kinase domain occupies 6 to 261 (YCYMRVVGRG…VRSILRQPYI (256 aa)). ATP contacts are provided by residues 12–20 (VGRGSYGEV) and K35. D131 serves as the catalytic Proton acceptor. Position 165 is a phosphothreonine; by autocatalysis (T165). 4 disordered regions span residues 329-358 (QEKP…NTGE), 379-515 (ANAG…LPSY), 527-611 (QQND…SITQ), and 628-657 (LSED…TNEM). Phosphoserine occurs at positions 340 and 343. Composition is skewed to polar residues over residues 412–421 (QGNTKSSDQP), 456–467 (DQVTGIIENQDS), 473–484 (QPHSSMSEPSLS), 496–505 (AHSGTKSQFQ), and 541–551 (VNSSRTSSTAS). K566 carries the post-translational modification N6-methyllysine. Residues 602-611 (RFSSDCSITQ) show a composition bias toward polar residues. Residues 641–657 (DKSDGDSREGKSHTNEM) show a composition bias toward basic and acidic residues. S675 is modified (phosphoserine).

This sequence belongs to the protein kinase superfamily. NEK Ser/Thr protein kinase family. NIMA subfamily. Mn(2+) is required as a cofactor. In terms of tissue distribution, expressed ubiquitously among various organs and is up-regulated in the testis.

The protein localises to the cytoplasm. Its subcellular location is the cell projection. The protein resides in the cilium. It carries out the reaction L-seryl-[protein] + ATP = O-phospho-L-seryl-[protein] + ADP + H(+). The enzyme catalyses L-threonyl-[protein] + ATP = O-phospho-L-threonyl-[protein] + ADP + H(+). Its function is as follows. Required for normal entry into proliferative arrest after a limited number of cell divisions, also called replicative senescence. Required for normal cell cycle arrest in response to double-stranded DNA damage. Protein kinase that seems to act exclusively upon threonine residues. The chain is Serine/threonine-protein kinase Nek4 (Nek4) from Mus musculus (Mouse).